A 546-amino-acid polypeptide reads, in one-letter code: Beta-amylase (546 aa).

The first 30 residues, 1–30 (MKNQFQYCCIVILSVVMLFVSLLIPQASSA), serve as a signal peptide directing secretion. Asp-79 contributes to the substrate binding site. Ca(2+) is bound by residues Glu-86, Asp-90, and Gln-91. The substrate site is built by His-119 and Asp-127. An intrachain disulfide couples Cys-121 to Cys-129. 2 residues coordinate Ca(2+): Glu-171 and Glu-174. Glu-202 acts as the Proton donor in catalysis. Substrate-binding residues include Lys-317, His-322, and Thr-360. Catalysis depends on Glu-397, which acts as the Proton acceptor. Residues 398 to 399 (NA) and Arg-427 each bind substrate. One can recognise a CBM20 domain in the interval 444 to 546 (LLGVTPVMQT…LKTTSHTSSW (103 aa)).

It belongs to the glycosyl hydrolase 14 family. In terms of assembly, monomer. The cofactor is Ca(2+).

It catalyses the reaction Hydrolysis of (1-&gt;4)-alpha-D-glucosidic linkages in polysaccharides so as to remove successive maltose units from the non-reducing ends of the chains.. This chain is Beta-amylase (spoII), found in Bacillus cereus.